The following is a 236-amino-acid chain: Leucyl/phenylalanyl-tRNA--protein transferase (236 aa).

This sequence belongs to the L/F-transferase family.

The protein localises to the cytoplasm. The enzyme catalyses N-terminal L-lysyl-[protein] + L-leucyl-tRNA(Leu) = N-terminal L-leucyl-L-lysyl-[protein] + tRNA(Leu) + H(+). It carries out the reaction N-terminal L-arginyl-[protein] + L-leucyl-tRNA(Leu) = N-terminal L-leucyl-L-arginyl-[protein] + tRNA(Leu) + H(+). It catalyses the reaction L-phenylalanyl-tRNA(Phe) + an N-terminal L-alpha-aminoacyl-[protein] = an N-terminal L-phenylalanyl-L-alpha-aminoacyl-[protein] + tRNA(Phe). Functionally, functions in the N-end rule pathway of protein degradation where it conjugates Leu, Phe and, less efficiently, Met from aminoacyl-tRNAs to the N-termini of proteins containing an N-terminal arginine or lysine. This is Leucyl/phenylalanyl-tRNA--protein transferase from Shewanella woodyi (strain ATCC 51908 / MS32).